A 788-amino-acid chain; its full sequence is Endonuclease MutS2 (788 aa).

Residue 332-339 (GPNTGGKT) coordinates ATP. The Smr domain occupies 713–788 (VDLRGMDAEE…GTGVTVVELK (76 aa)).

It belongs to the DNA mismatch repair MutS family. MutS2 subfamily. In terms of assembly, homodimer. Binds to stalled ribosomes, contacting rRNA.

Functionally, endonuclease that is involved in the suppression of homologous recombination and thus may have a key role in the control of bacterial genetic diversity. Acts as a ribosome collision sensor, splitting the ribosome into its 2 subunits. Detects stalled/collided 70S ribosomes which it binds and splits by an ATP-hydrolysis driven conformational change. Acts upstream of the ribosome quality control system (RQC), a ribosome-associated complex that mediates the extraction of incompletely synthesized nascent chains from stalled ribosomes and their subsequent degradation. Probably generates substrates for RQC. In Clostridium botulinum (strain Okra / Type B1), this protein is Endonuclease MutS2.